The primary structure comprises 505 residues: Protein disulfide-isomerase A3 (505 aa).

The signal sequence occupies residues 1–24 (MSVPRPSRAALLLLVPLLALSAGA). Thioredoxin domains are found at residues 25-131 (SDVV…KQAG) and 341-483 (SRDG…REAT). Residues cysteine 55 and cysteine 58 each act as nucleophile in the active site. 3 disulfides stabilise this stretch: cysteine 55–cysteine 58, cysteine 83–cysteine 90, and cysteine 404–cysteine 407. Active-site nucleophile residues include cysteine 404 and cysteine 407. The interval 486–505 (PVLQEEDKAKKSKKKAKEDL) is disordered. Basic residues predominate over residues 495-505 (KKSKKKAKEDL). A Prevents secretion from ER motif is present at residues 502-505 (KEDL).

Belongs to the protein disulfide isomerase family.

The protein resides in the endoplasmic reticulum. It localises to the endoplasmic reticulum lumen. The protein localises to the melanosome. The catalysed reaction is Catalyzes the rearrangement of -S-S- bonds in proteins.. In terms of biological role, protein disulfide isomerase that catalyzes the formation, isomerization, and reduction or oxidation of disulfide bonds in client proteins and functions as a protein folding chaperone. The polypeptide is Protein disulfide-isomerase A3 (PDIA3) (Gallus gallus (Chicken)).